A 472-amino-acid polypeptide reads, in one-letter code: MQRLRWLLLLIVVLVIGASFVLVKLPLQLGLDLRGGAQLTIEVQPTKEIPQIDNDSLVAVKTVIENRVNALGVSEPLVQTAGEDKIVVQLPGVTDPGQAERILGGTAQLEFQQQRPGTEGEFQAEYSIKRQLDAELENLRRSGASPENSDRLEELIKAKEESNKALLALFEPMGLTGKNLTDARPSPNQSGTAWEVALRFDEEGGQKFAELTQAVAGTGRSLGVFLDNDLISAPVVGVEFANTGITGGAAVITGNFTIDTANDLAVQLRGGSLPFPVEVVENRTVGATLGQESIRRSLVAGFVGLVLVLVFMAVYYRLPGIVADISLMIYAVLTLAAFALVGVTLTLPGIAGFILSIGMAVDANVLIFERTREELRAGNTLYRSVEAGFFRAFSSILDSNVTTLIACAALFWFGSGLVKGFALTLAIGVMVSLFTALTCSRTLLLVIVLSLPKVRQNPRLFCPNLSSVTAKS.

Helical transmembrane passes span 7-27, 298-318, 326-345, 349-368, 392-414, and 432-452; these read LLLL…KLPL, LVAG…YYRL, SLMI…GVTL, GIAG…VLIF, AFSS…FWFG, and SLFT…LSLP.

It belongs to the SecD/SecF family. SecD subfamily. As to quaternary structure, forms a complex with SecF. Part of the essential Sec protein translocation apparatus which comprises SecA, SecYEG and auxiliary proteins SecDF. Other proteins may also be involved.

Its subcellular location is the cell inner membrane. Functionally, part of the Sec protein translocase complex. Interacts with the SecYEG preprotein conducting channel. SecDF uses the proton motive force (PMF) to complete protein translocation after the ATP-dependent function of SecA. In terms of biological role, probably participates in protein translocation into and across both the cytoplasmic and thylakoid membranes in cyanobacterial cells. This is Protein translocase subunit SecD from Synechocystis sp. (strain ATCC 27184 / PCC 6803 / Kazusa).